The chain runs to 381 residues: 1-deoxy-D-xylulose 5-phosphate reductoisomerase (381 aa).

5 residues coordinate NADPH: Gly-13, Ser-14, Ile-15, Asn-40, and Asn-114. Position 115 (Lys-115) interacts with 1-deoxy-D-xylulose 5-phosphate. Glu-116 is a binding site for NADPH. Asp-140 is a Mn(2+) binding site. Positions 141, 142, 166, and 189 each coordinate 1-deoxy-D-xylulose 5-phosphate. Glu-142 provides a ligand contact to Mn(2+). Position 195 (Gly-195) interacts with NADPH. 1-deoxy-D-xylulose 5-phosphate contacts are provided by Ser-202, Asn-207, Lys-208, and Glu-211. Mn(2+) is bound at residue Glu-211.

This sequence belongs to the DXR family. The cofactor is Mg(2+). Mn(2+) serves as cofactor.

It catalyses the reaction 2-C-methyl-D-erythritol 4-phosphate + NADP(+) = 1-deoxy-D-xylulose 5-phosphate + NADPH + H(+). Its pathway is isoprenoid biosynthesis; isopentenyl diphosphate biosynthesis via DXP pathway; isopentenyl diphosphate from 1-deoxy-D-xylulose 5-phosphate: step 1/6. In terms of biological role, catalyzes the NADPH-dependent rearrangement and reduction of 1-deoxy-D-xylulose-5-phosphate (DXP) to 2-C-methyl-D-erythritol 4-phosphate (MEP). The protein is 1-deoxy-D-xylulose 5-phosphate reductoisomerase of Treponema denticola (strain ATCC 35405 / DSM 14222 / CIP 103919 / JCM 8153 / KCTC 15104).